The sequence spans 319 residues: UDP-N-acetylenolpyruvoylglucosamine reductase (319 aa).

One can recognise an FAD-binding PCMH-type domain in the interval 35-198 (VGGPAEAMFK…TGCVLAGRPD (164 aa)). Residue arginine 178 is part of the active site. Serine 227 functions as the Proton donor in the catalytic mechanism. Glutamate 302 is an active-site residue.

The protein belongs to the MurB family. FAD is required as a cofactor.

Its subcellular location is the cytoplasm. The enzyme catalyses UDP-N-acetyl-alpha-D-muramate + NADP(+) = UDP-N-acetyl-3-O-(1-carboxyvinyl)-alpha-D-glucosamine + NADPH + H(+). It participates in cell wall biogenesis; peptidoglycan biosynthesis. Its function is as follows. Cell wall formation. In Rhodospirillum rubrum (strain ATCC 11170 / ATH 1.1.1 / DSM 467 / LMG 4362 / NCIMB 8255 / S1), this protein is UDP-N-acetylenolpyruvoylglucosamine reductase.